The following is a 297-amino-acid chain: TGF-beta receptor type-2 (297 aa).

The signal sequence occupies residues 1-23; that stretch reads MGRGLLGGLWPLHVVLWTRIAST. Over 24–166 the chain is Extracellular; sequence IPPHVPKSVN…NPDLLLVIFQ (143 aa). 6 disulfide bridges follow: Cys-51-Cys-84, Cys-54-Cys-71, Cys-61-Cys-67, Cys-77-Cys-101, Cys-121-Cys-136, and Cys-138-Cys-143. N-linked (GlcNAc...) asparagine glycans are attached at residues Asn-70 and Asn-94. Residues 167–187 form a helical membrane-spanning segment; the sequence is VTGVSLLPPLGIAIAVIITFY. The Cytoplasmic segment spans residues 188-297; sequence CYRVHRQQKL…KTEKDIFSDL (110 aa). The Protein kinase domain occupies 244–297; the sequence is IELDTLVGKGRFAEVYKAKLRQNTSEQFETVAVKIFPYEEYASWKTEKDIFSDL. ATP is bound by residues 250–258 and Lys-277; that span reads VGKGRFAEV.

Belongs to the protein kinase superfamily. TKL Ser/Thr protein kinase family. TGFB receptor subfamily. As to quaternary structure, homodimer. Heterohexamer; TGFB1, TGFB2 and TGFB3 homodimeric ligands assemble a functional receptor composed of two TGFBR1 and TGFBR2 heterodimers to form a ligand-receptor heterohexamer. The respective affinity of TGFRB1 and TGFRB2 for the ligands may modulate the kinetics of assembly of the receptor and may explain the different biological activities of TGFB1, TGFB2 and TGFB3. Component of a complex composed of TSC22D1 (via N-terminus), TGFBR1 and TGFBR2; the interaction between TSC22D1 and TGFBR1 is inhibited by SMAD7 and promoted by TGFB1. Interacts with DAXX. Interacts with DYNLT4. Interacts with ZFYVE9; ZFYVE9 recruits SMAD2 and SMAD3 to the TGF-beta receptor. Interacts with and is activated by SCUBE3; this interaction does not affect TGFB1-binding to TGFBR2. Interacts with VPS39; this interaction is independent of the receptor kinase activity and of the presence of TGF-beta. Interacts with CLU. Mg(2+) serves as cofactor. Requires Mn(2+) as cofactor. In terms of processing, phosphorylated on a Ser/Thr residue in the cytoplasmic domain.

The protein localises to the cell membrane. Its subcellular location is the membrane raft. It catalyses the reaction L-threonyl-[receptor-protein] + ATP = O-phospho-L-threonyl-[receptor-protein] + ADP + H(+). It carries out the reaction L-seryl-[receptor-protein] + ATP = O-phospho-L-seryl-[receptor-protein] + ADP + H(+). Its function is as follows. Transmembrane serine/threonine kinase forming with the TGF-beta type I serine/threonine kinase receptor, TGFBR1, the non-promiscuous receptor for the TGF-beta cytokines TGFB1, TGFB2 and TGFB3. Transduces the TGFB1, TGFB2 and TGFB3 signal from the cell surface to the cytoplasm and is thus regulating a plethora of physiological and pathological processes including cell cycle arrest in epithelial and hematopoietic cells, control of mesenchymal cell proliferation and differentiation, wound healing, extracellular matrix production, immunosuppression and carcinogenesis. The formation of the receptor complex composed of 2 TGFBR1 and 2 TGFBR2 molecules symmetrically bound to the cytokine dimer results in the phosphorylation and the activation of TGFRB1 by the constitutively active TGFBR2. Activated TGFBR1 phosphorylates SMAD2 which dissociates from the receptor and interacts with SMAD4. The SMAD2-SMAD4 complex is subsequently translocated to the nucleus where it modulates the transcription of the TGF-beta-regulated genes. This constitutes the canonical SMAD-dependent TGF-beta signaling cascade. Also involved in non-canonical, SMAD-independent TGF-beta signaling pathways. The polypeptide is TGF-beta receptor type-2 (TGFBR2) (Sus scrofa (Pig)).